We begin with the raw amino-acid sequence, 403 residues long: DNA polymerase IV (403 aa).

In terms of domain architecture, UmuC spans 23–203; that stretch reads IAHMDCDAFY…KPVNILPGVG (181 aa). Mg(2+)-binding residues include Asp27 and Asp120. Residue Glu121 is part of the active site.

It belongs to the DNA polymerase type-Y family. In terms of assembly, monomer. It depends on Mg(2+) as a cofactor.

The protein resides in the cytoplasm. The catalysed reaction is DNA(n) + a 2'-deoxyribonucleoside 5'-triphosphate = DNA(n+1) + diphosphate. Poorly processive, error-prone DNA polymerase involved in untargeted mutagenesis. Copies undamaged DNA at stalled replication forks, which arise in vivo from mismatched or misaligned primer ends. These misaligned primers can be extended by PolIV. Exhibits no 3'-5' exonuclease (proofreading) activity. May be involved in translesional synthesis, in conjunction with the beta clamp from PolIII. The chain is DNA polymerase IV from Caulobacter vibrioides (strain ATCC 19089 / CIP 103742 / CB 15) (Caulobacter crescentus).